We begin with the raw amino-acid sequence, 44 residues long: Protein PsbN (44 aa).

A helical membrane pass occupies residues 7–29 (VATVFVSCLVLSITGYSLYIGFG).

It belongs to the PsbN family.

The protein localises to the plastid. The protein resides in the chloroplast thylakoid membrane. Functionally, may play a role in photosystem I and II biogenesis. The polypeptide is Protein PsbN (Nephroselmis olivacea (Green alga)).